Reading from the N-terminus, the 211-residue chain is FMN-dependent NADH:quinone oxidoreductase (211 aa).

FMN is bound by residues 17–19 (SYS) and 102–105 (MWNF).

This sequence belongs to the azoreductase type 1 family. In terms of assembly, homodimer. It depends on FMN as a cofactor.

It carries out the reaction 2 a quinone + NADH + H(+) = 2 a 1,4-benzosemiquinone + NAD(+). The catalysed reaction is N,N-dimethyl-1,4-phenylenediamine + anthranilate + 2 NAD(+) = 2-(4-dimethylaminophenyl)diazenylbenzoate + 2 NADH + 2 H(+). Functionally, quinone reductase that provides resistance to thiol-specific stress caused by electrophilic quinones. In terms of biological role, also exhibits azoreductase activity. Catalyzes the reductive cleavage of the azo bond in aromatic azo compounds to the corresponding amines. The sequence is that of FMN-dependent NADH:quinone oxidoreductase from Geobacillus kaustophilus (strain HTA426).